A 308-amino-acid chain; its full sequence is Putative integrase/recombinase y4qK (308 aa).

The Core-binding (CB) domain maps to 15-97 (LVMTPLRQRM…ALRFFFSVTL (83 aa)). Positions 115–288 (KLPIILSPDE…ATNKVCATSS (174 aa)) constitute a Tyr recombinase domain. Active-site residues include arginine 150, lysine 175, histidine 240, arginine 243, and histidine 266. The O-(3'-phospho-DNA)-tyrosine intermediate role is filled by tyrosine 275.

The protein belongs to the 'phage' integrase family.

May function as an integrase. This Sinorhizobium fredii (strain NBRC 101917 / NGR234) protein is Putative integrase/recombinase y4qK.